The chain runs to 601 residues: Pyranose 2-oxidase (601 aa).

A Tele-8alpha-FAD histidine modification is found at H151. 2 residues coordinate substrate: Q406 and H408. Catalysis depends on H505, which acts as the Proton acceptor. N558 is an active-site residue. The disordered stretch occupies residues 577–601 (KLGKKGSHSGNRDDGDVDTDTDDDA). The span at 591 to 601 (GDVDTDTDDDA) shows a compositional bias: acidic residues.

It belongs to the GMC oxidoreductase family. In terms of assembly, homotetramer. Requires FAD as cofactor.

It catalyses the reaction D-glucose + O2 = 2-dehydro-D-glucose + H2O2. Its function is as follows. Catalyzes the oxidation of various aldopyranoses and disaccharides on carbon-2 to the corresponding 2-keto sugars concomitant with the reduction of O(2) to H(2)O(2). The sequence is that of Pyranose 2-oxidase (p2ox) from Emericella nidulans (strain FGSC A4 / ATCC 38163 / CBS 112.46 / NRRL 194 / M139) (Aspergillus nidulans).